The sequence spans 137 residues: Ribosome-binding factor A (137 aa).

Belongs to the RbfA family. As to quaternary structure, monomer. Binds 30S ribosomal subunits, but not 50S ribosomal subunits or 70S ribosomes.

It is found in the cytoplasm. One of several proteins that assist in the late maturation steps of the functional core of the 30S ribosomal subunit. Associates with free 30S ribosomal subunits (but not with 30S subunits that are part of 70S ribosomes or polysomes). Required for efficient processing of 16S rRNA. May interact with the 5'-terminal helix region of 16S rRNA. This Synechococcus sp. (strain ATCC 27144 / PCC 6301 / SAUG 1402/1) (Anacystis nidulans) protein is Ribosome-binding factor A.